Reading from the N-terminus, the 198-residue chain is Nascent polypeptide-associated complex subunit alpha (198 aa).

The NAC-A/B domain occupies 48-113; sequence ITRVVLKRTR…QAAAETGSVS (66 aa). The 40-residue stretch at 159–198 folds into the UBA domain; that stretch reads LEDSDIKLVMEQANVSRNKAINGLKKNDSDVVNTIMDLCK.

This sequence belongs to the NAC-alpha family. Part of the nascent polypeptide-associated complex (NAC), consisting of EGD2 and EGD1. NAC associates with ribosomes via EGD1.

The protein resides in the cytoplasm. Its subcellular location is the nucleus. In terms of biological role, component of the nascent polypeptide-associated complex (NAC), a dynamic component of the ribosomal exit tunnel, protecting the emerging polypeptides from interaction with other cytoplasmic proteins to ensure appropriate nascent protein targeting. The NAC complex also promotes mitochondrial protein import by enhancing productive ribosome interactions with the outer mitochondrial membrane and blocks the inappropriate interaction of ribosomes translating non-secretory nascent polypeptides with translocation sites in the membrane of the endoplasmic reticulum. EGD2 may also be involved in transcription regulation. This Yarrowia lipolytica (strain CLIB 122 / E 150) (Yeast) protein is Nascent polypeptide-associated complex subunit alpha (EGD2).